Reading from the N-terminus, the 678-residue chain is Glycine--tRNA ligase beta subunit (678 aa).

The protein belongs to the class-II aminoacyl-tRNA synthetase family. In terms of assembly, tetramer of two alpha and two beta subunits.

The protein resides in the cytoplasm. It carries out the reaction tRNA(Gly) + glycine + ATP = glycyl-tRNA(Gly) + AMP + diphosphate. This is Glycine--tRNA ligase beta subunit from Streptococcus pneumoniae (strain ATCC 700669 / Spain 23F-1).